The chain runs to 1088 residues: Myocardin-related transcription factor B (1088 aa).

Glutamate 22 carries the post-translational modification Phosphoserine. An RPEL 1 repeat occupies 40 to 65; the sequence is EVLQLRLQQRRTREQLVDQGIMPPLK. Phosphoserine is present on serine 66. 2 RPEL repeats span residues 84 to 109 and 128 to 153; these read NFLKHKIRSRPDRSELVRMHILEETF and DDLNEKIAQRPGPMELVEKNILPVDS. Disordered stretches follow at residues 165 to 310, 349 to 389, 472 to 508, and 528 to 553; these read EDYP…NEPQ, KPLN…PSSL, AELPPTGTSNATRVENVHSPLPISPSPSEQSSLSTDD, and LSSSPLRMTNNEDSLSPTSSTLSNLE. Residues 197–213 show a composition bias toward low complexity; sequence SAASPSEPKVSESPSPV. The span at 214–226 shows a compositional bias: polar residues; the sequence is TTNTPAQFASVSP. Positions 238–248 are enriched in pro residues; sequence ADQPPPRPAAP. The segment covering 272–287 has biased composition (basic and acidic residues); that stretch reads NPNDKHRSKKCKDPKP. Low complexity predominate over residues 355 to 366; that stretch reads NSNSGNSALNNA. Phosphothreonine is present on residues threonine 367 and threonine 370. The segment covering 367 to 378 has biased composition (polar residues); it reads TPNTPRQNTSTP. An SAP domain is found at 389-423; the sequence is LDDLKVSELKTELKLRGLPVSGTKPDLIERLKPYQ. A compositionally biased stretch (polar residues) spans 528 to 540; sequence LSSSPLRMTNNED. 2 positions are modified to phosphoserine: serine 541 and serine 543. Residues 541 to 550 show a composition bias toward low complexity; that stretch reads SLSPTSSTLS. The stretch at 545–601 forms a coiled coil; sequence TSSTLSNLELDAAEKDRKLQEKEKQIEELKRKLEQEQKLVEVLKMQLEVEKRGQQQR. The required for interaction with itself and with MRTFA stretch occupies residues 563-591; the sequence is LQEKEKQIEELKRKLEQEQKLVEVLKMQL. Disordered regions lie at residues 595-655 and 829-886; these read KRGQ…QPVS and NAPL…STQA. A Glycyl lysine isopeptide (Lys-Gly) (interchain with G-Cter in SUMO1) cross-link involves residue lysine 628. Residues 829 to 838 show a composition bias toward polar residues; the sequence is NAPLPSLQNG. A compositionally biased stretch (basic and acidic residues) spans 867–879; it reads KTKDPPRYEEAIK. Phosphoserine is present on serine 921.

As to quaternary structure, interacts with MRTFA and SRF. Post-translationally, O-glycosylated.

Its subcellular location is the nucleus. In terms of biological role, acts as a transcriptional coactivator of serum response factor (SRF). Required for skeletal myogenic differentiation. This is Myocardin-related transcription factor B from Homo sapiens (Human).